A 315-amino-acid polypeptide reads, in one-letter code: ATP synthase gamma chain (315 aa).

It belongs to the ATPase gamma chain family. In terms of assembly, F-type ATPases have 2 components, CF(1) - the catalytic core - and CF(0) - the membrane proton channel. CF(1) has five subunits: alpha(3), beta(3), gamma(1), delta(1), epsilon(1). CF(0) has three main subunits: a, b and c.

It localises to the cell membrane. Produces ATP from ADP in the presence of a proton gradient across the membrane. The gamma chain is believed to be important in regulating ATPase activity and the flow of protons through the CF(0) complex. The protein is ATP synthase gamma chain of Latilactobacillus sakei subsp. sakei (strain 23K) (Lactobacillus sakei subsp. sakei).